The chain runs to 96 residues: Large ribosomal subunit protein bL21 (96 aa).

This sequence belongs to the bacterial ribosomal protein bL21 family. As to quaternary structure, part of the 50S ribosomal subunit. Contacts protein L20.

This protein binds to 23S rRNA in the presence of protein L20. The chain is Large ribosomal subunit protein bL21 from Hydrogenobaculum sp. (strain Y04AAS1).